The sequence spans 212 residues: Probable NADH dehydrogenase [ubiquinone] iron-sulfur protein 8, mitochondrial (212 aa).

2 consecutive 4Fe-4S ferredoxin-type domains span residues 104-133 and 143-172; these read RRYPSGEERCIACKLCEAICPAQAITIEAE and TRYDIDMTKCIYCGLCQEACPVDAIVEGPN. [4Fe-4S] cluster contacts are provided by C113, C116, C119, C123, C152, C155, C158, and C162.

It belongs to the complex I 23 kDa subunit family. In terms of assembly, complex I is composed of 45 different subunits This is a component of the iron-sulfur (IP) fragment of the enzyme. It depends on [4Fe-4S] cluster as a cofactor.

It is found in the mitochondrion. The catalysed reaction is a ubiquinone + NADH + 5 H(+)(in) = a ubiquinol + NAD(+) + 4 H(+)(out). Core subunit of the mitochondrial membrane respiratory chain NADH dehydrogenase (Complex I) that is believed to belong to the minimal assembly required for catalysis. Complex I functions in the transfer of electrons from NADH to the respiratory chain. The immediate electron acceptor for the enzyme is believed to be ubiquinone. This Caenorhabditis elegans protein is Probable NADH dehydrogenase [ubiquinone] iron-sulfur protein 8, mitochondrial.